The chain runs to 84 residues: Small ribosomal subunit protein uS17 (84 aa).

Belongs to the universal ribosomal protein uS17 family. As to quaternary structure, part of the 30S ribosomal subunit.

In terms of biological role, one of the primary rRNA binding proteins, it binds specifically to the 5'-end of 16S ribosomal RNA. The polypeptide is Small ribosomal subunit protein uS17 (Photorhabdus laumondii subsp. laumondii (strain DSM 15139 / CIP 105565 / TT01) (Photorhabdus luminescens subsp. laumondii)).